A 245-amino-acid polypeptide reads, in one-letter code: MVFKVLTLFPEVILQATNFSILKRAQEKGLIKIEAINIRDYTKDKHKRTDDYPYGGGFGMVMTAQPIVDAYESIKSSKPHRVIYLTPQGKKYTQDIAKEFSKEEELVIICGHYEGIDQRVIDLIVTDEISIGDYVLSGGEYAALVLIDSISRLVEGVIEKKSVEEESFSECLLEYPHYTRPYEFRGLKVPEVLLSGNHEKIKKWRRYQSLLKTIKSRPDLINAANLTKEDIEFLIKYCESQKIVL.

Residues Gly-111 and 131 to 136 (IGDYVL) each bind S-adenosyl-L-methionine.

The protein belongs to the RNA methyltransferase TrmD family. Homodimer.

The protein resides in the cytoplasm. It carries out the reaction guanosine(37) in tRNA + S-adenosyl-L-methionine = N(1)-methylguanosine(37) in tRNA + S-adenosyl-L-homocysteine + H(+). In terms of biological role, specifically methylates guanosine-37 in various tRNAs. The sequence is that of tRNA (guanine-N(1)-)-methyltransferase from Caldicellulosiruptor saccharolyticus (strain ATCC 43494 / DSM 8903 / Tp8T 6331).